Reading from the N-terminus, the 237-residue chain is Ribosomal RNA small subunit methyltransferase G (237 aa).

Residues G78, F83, 129-130 (AE), and R148 contribute to the S-adenosyl-L-methionine site.

The protein belongs to the methyltransferase superfamily. RNA methyltransferase RsmG family.

The protein localises to the cytoplasm. In terms of biological role, specifically methylates the N7 position of a guanine in 16S rRNA. The protein is Ribosomal RNA small subunit methyltransferase G of Streptococcus thermophilus (strain ATCC BAA-491 / LMD-9).